A 515-amino-acid polypeptide reads, in one-letter code: Galactokinase (515 aa).

Residues Arg48, Asp54, His55, and Asp57 each contribute to the alpha-D-galactose site. ATP-binding residues include Gly155, Gly157, Ser159, and Ser160. Residue Asp205 coordinates alpha-D-galactose. The active-site Proton acceptor is Asp205. Positions 249, 250, and 251 each coordinate ATP. Tyr259 is an alpha-D-galactose binding site.

The protein belongs to the GHMP kinase family. GalK subfamily.

The catalysed reaction is alpha-D-galactose + ATP = alpha-D-galactose 1-phosphate + ADP + H(+). The protein operates within carbohydrate metabolism; galactose metabolism. Its function is as follows. Galactokinase is a key enzyme in the galactose metabolism where it catalyzes the conversion of alpha-D-galactose to galactose 1-phosphate. Can also induce the transcription of the gal genes in response to the organism being challenged with galactose as the sole source of carbon. The sequence is that of Galactokinase from Candida albicans (Yeast).